The following is an 89-amino-acid chain: Small ribosomal subunit protein uS15 (89 aa).

The protein belongs to the universal ribosomal protein uS15 family. In terms of assembly, part of the 30S ribosomal subunit. Forms a bridge to the 50S subunit in the 70S ribosome, contacting the 23S rRNA.

Functionally, one of the primary rRNA binding proteins, it binds directly to 16S rRNA where it helps nucleate assembly of the platform of the 30S subunit by binding and bridging several RNA helices of the 16S rRNA. Forms an intersubunit bridge (bridge B4) with the 23S rRNA of the 50S subunit in the ribosome. The sequence is that of Small ribosomal subunit protein uS15 from Shewanella loihica (strain ATCC BAA-1088 / PV-4).